Here is a 238-residue protein sequence, read N- to C-terminus: Covalently-linked cell wall protein 14 (238 aa).

The signal sequence occupies residues 1–22 (MRATTLLSSVVSLALLSKEVLA). In terms of domain architecture, CFEM spans 23–110 (TPPACLLACV…ASSSSKASSS (88 aa)). 4 cysteine pairs are disulfide-bonded: Cys27/Cys67, Cys31/Cys62, Cys42/Cys50, and Cys52/Cys83. The N-linked (GlcNAc...) asparagine glycan is linked to Asn87. Residues 91 to 203 (GDSSSSASSS…TVSQETVSSA (113 aa)) form a disordered region. Residues 93-203 (SSSSASSSAS…TVSQETVSSA (111 aa)) show a composition bias toward low complexity. Lys161 is covalently cross-linked (Glycyl lysine isopeptide (Lys-Gly) (interchain with G-Cter in ubiquitin)). Gly217 carries GPI-anchor amidated glycine lipidation. Positions 218 to 238 (SGNVLEAGKSVFIAAVAAMLI) are cleaved as a propeptide — removed in mature form.

This sequence belongs to the CCW14 family. Post-translationally, extensively O-glycosylated. The GPI-anchor is attached to the protein in the endoplasmic reticulum and serves to target the protein to the cell surface. There, the glucosamine-inositol phospholipid moiety is cleaved off and the GPI-modified mannoprotein is covalently attached via its lipidless GPI glycan remnant to the 1,6-beta-glucan of the outer cell wall layer.

The protein localises to the secreted. It localises to the cell wall. The protein resides in the membrane. Its function is as follows. Component of the inner layer of the cell wall. This chain is Covalently-linked cell wall protein 14 (CCW14), found in Saccharomyces cerevisiae (strain ATCC 204508 / S288c) (Baker's yeast).